The sequence spans 436 residues: Gamma-glutamyl phosphate reductase (436 aa).

It belongs to the gamma-glutamyl phosphate reductase family.

It is found in the cytoplasm. The catalysed reaction is L-glutamate 5-semialdehyde + phosphate + NADP(+) = L-glutamyl 5-phosphate + NADPH + H(+). The protein operates within amino-acid biosynthesis; L-proline biosynthesis; L-glutamate 5-semialdehyde from L-glutamate: step 2/2. In terms of biological role, catalyzes the NADPH-dependent reduction of L-glutamate 5-phosphate into L-glutamate 5-semialdehyde and phosphate. The product spontaneously undergoes cyclization to form 1-pyrroline-5-carboxylate. In Polaromonas sp. (strain JS666 / ATCC BAA-500), this protein is Gamma-glutamyl phosphate reductase.